A 237-amino-acid chain; its full sequence is Carboxy-S-adenosyl-L-methionine synthase (237 aa).

S-adenosyl-L-methionine contacts are provided by residues tyrosine 36, glycine 61–serine 63, aspartate 86–asparagine 87, aspartate 112–isoleucine 113, asparagine 127, and arginine 194.

Belongs to the class I-like SAM-binding methyltransferase superfamily. Cx-SAM synthase family. As to quaternary structure, homodimer.

It catalyses the reaction prephenate + S-adenosyl-L-methionine = carboxy-S-adenosyl-L-methionine + 3-phenylpyruvate + H2O. In terms of biological role, catalyzes the conversion of S-adenosyl-L-methionine (SAM) to carboxy-S-adenosyl-L-methionine (Cx-SAM). In Ruthia magnifica subsp. Calyptogena magnifica, this protein is Carboxy-S-adenosyl-L-methionine synthase.